We begin with the raw amino-acid sequence, 591 residues long: Potassium channel KAT4 (591 aa).

Over 1-32 (MAARSELLRPAFGEASPSLGRFVINPHSCSYR) the chain is Cytoplasmic. A helical transmembrane segment spans residues 33–53 (WWHMFLIMLVLYSAWASPFEL). The Extracellular segment spans residues 54–63 (SMEKAASIAL). Residues 64-84 (VVTDLVVDVFFAIDIALSFFV) form a helical membrane-spanning segment. The Cytoplasmic segment spans residues 85–109 (AYRDTSTGLLITDRRKITMRYLKRP). A helical transmembrane segment spans residues 110 to 130 (CFALDVASTIPLQIIYQLVTG). Over 131-137 (KRQGLWG) the chain is Extracellular. The chain crosses the membrane as a helical; Voltage-sensor span at residues 138 to 158 (LLNLLRLWRLRRVSKLFARVE). Topologically, residues 159–172 (KDIRFNYLWTRLIK) are cytoplasmic. The chain crosses the membrane as a helical span at residues 173–193 (LLCVTLFALHFAACIYLWMAF). Topologically, residues 194-220 (NYKIKELTWIGSQIHSFEDRSVWFCYT) are extracellular. Residues 221-240 (CAVYWSITTLATVGYGDLHA) constitute an intramembrane region (pore-forming). Residues 241–246 (TNIGEM) lie on the Extracellular side of the membrane. A helical transmembrane segment spans residues 247 to 267 (LFSIAFMLFNMGLTSYIIGNI). Residues 268–591 (TNLVVRETSN…IRDGDHLLFS (324 aa)) are Cytoplasmic-facing. 349–469 (LFQGVSDSLI…YIVFSNFIQY (121 aa)) lines the a nucleoside 3',5'-cyclic phosphate pocket. The 71-residue stretch at 521 to 591 (RVVIHEQLPN…IRDGDHLLFS (71 aa)) folds into the KHA domain.

Belongs to the potassium channel family. Plant (TC 1.A.1.4) subfamily.

It is found in the membrane. Its function is as follows. Probable inward-rectifying potassium channel. Assuming opened or closed conformations in response to the voltage difference across the membrane, the channel is activated by hyperpolarization. This Oryza sativa subsp. japonica (Rice) protein is Potassium channel KAT4.